A 327-amino-acid chain; its full sequence is Olfactory receptor 226 (327 aa).

At 1 to 26 the chain is on the extracellular side; that stretch reads MERRNHSGRVSEFVLLGFPAPAPLRV. Asn5 is a glycosylation site (N-linked (GlcNAc...) asparagine). Residues 27 to 50 traverse the membrane as a helical segment; sequence LLFFLSLLAYVLVLTENMLIIIAI. At 51-58 the chain is on the cytoplasmic side; the sequence is RNHPTLHK. Residues 59 to 80 form a helical membrane-spanning segment; that stretch reads PMYFFLANMSFLEIWYVTVTIP. The Extracellular segment spans residues 81-104; it reads KMLAGFIGSKENHGQLISFEACMT. A disulfide bridge connects residues Cys102 and Cys194. Residues 105–125 form a helical membrane-spanning segment; sequence QLYFFLGLGCTECVLLAVMAY. Topologically, residues 126–144 are cytoplasmic; sequence DRYVAICHPLHYPVIVSSR. A helical transmembrane segment spans residues 145–163; that stretch reads LCVQMAAGSWAGGFGISMV. Over 164-201 the chain is Extracellular; sequence KVFLISRLSYCGPNTINHFFCDVSPLLNLSCTDMSTAE. A helical transmembrane segment spans residues 202-224; that stretch reads LTDFVLAIFILLGPLSVTGASYM. Residues 225–241 lie on the Cytoplasmic side of the membrane; it reads AITGAVMRIPSAAGRHK. Residues 242–265 form a helical membrane-spanning segment; the sequence is AFSTCASHLTVVIIFYAASIFIYA. The Extracellular portion of the chain corresponds to 266–277; that stretch reads RPKALSAFDTNK. The chain crosses the membrane as a helical span at residues 278-297; it reads LVSVLYAVIVPLFNPIIYCL. The Cytoplasmic portion of the chain corresponds to 298 to 327; it reads RNQDVKRALRRTLHLAQDQEANTNKGSKNG.

Belongs to the G-protein coupled receptor 1 family. In terms of tissue distribution, olfactory epithelium.

The protein localises to the cell membrane. In terms of biological role, odorant receptor. The chain is Olfactory receptor 226 (Olr226) from Rattus norvegicus (Rat).